The sequence spans 867 residues: Coiled-coil domain-containing protein 80 (867 aa).

An N-terminal signal peptide occupies residues 1–18 (MRARYMLGFGVLCLLTWA). 2 disordered regions span residues 83 to 121 (RKVLAQRRPAQGGTRNPIQQDDGTPGARARVSRMPSSAG) and 282 to 539 (DSQV…GTLA). A compositionally biased stretch (polar residues) spans 95–104 (GTRNPIQQDD). The segment covering 288–297 (PTERRKEIRK) has biased composition (basic and acidic residues). A compositionally biased stretch (low complexity) spans 301-370 (RPTTTTTPAP…PRTTRANTTP (70 aa)). A compositionally biased stretch (basic and acidic residues) spans 401-412 (ARYRDNHTSKKE). A compositionally biased stretch (basic residues) spans 426 to 435 (KPTKVRPTKK). Basic and acidic residues predominate over residues 436–451 (KNGDKDISNAYEEKYD). The span at 471–483 (KRGKGKTDKKKKK) shows a compositional bias: basic residues. Composition is skewed to basic and acidic residues over residues 484-504 (DKTDKLSKKDKAERRGKDGKG) and 514-523 (KILEKEDYQK).

The protein belongs to the CCDC80 family. Binds to various extracellular matrix proteins.

The protein resides in the secreted. It localises to the extracellular space. The protein localises to the extracellular matrix. Functionally, promotes cell adhesion and matrix assembly. This is Coiled-coil domain-containing protein 80 (ccdc80) from Danio rerio (Zebrafish).